The primary structure comprises 228 residues: Cytidylate kinase (228 aa).

Residue 11–19 (GPAGTGKSS) participates in ATP binding.

It belongs to the cytidylate kinase family. Type 1 subfamily.

It localises to the cytoplasm. It carries out the reaction CMP + ATP = CDP + ADP. It catalyses the reaction dCMP + ATP = dCDP + ADP. This chain is Cytidylate kinase, found in Mycobacterium avium (strain 104).